The chain runs to 198 residues: Protoplast secreted protein 2 (198 aa).

Residues 1–21 (MPRVAIIIYTLYGHVAATAEA) form the signal peptide. Residues 22-191 (EKKGIEAAGG…QVHEIQGKTF (170 aa)) form the Flavodoxin-like domain.

It belongs to the WrbA family.

The protein resides in the secreted. This is Protoplast secreted protein 2 (PST2) from Saccharomyces cerevisiae (strain ATCC 204508 / S288c) (Baker's yeast).